The chain runs to 579 residues: Protein disulfide isomerase-like 1-3 (579 aa).

A signal peptide spans 1–25 (MASSSTSISLLLFVSFILLLVNSRA). Asn27 is a glycosylation site (N-linked (GlcNAc...) asparagine). Basic and acidic residues-rich tracts occupy residues 44–69 (EESKEQSHGGGSYHEEEHDHQHRDFE) and 80–89 (EFHHGDHGYE). A disordered region spans residues 44–91 (EESKEQSHGGGSYHEEEHDHQHRDFENYDDLEQGGGEFHHGDHGYEEE). Positions 81–204 (FHHGDHGYEE…IVTWLKKKAS (124 aa)) constitute a Thioredoxin 1 domain. 2 N-linked (GlcNAc...) asparagine glycosylation sites follow: Asn108 and Asn115. Catalysis depends on nucleophile residues Cys128 and Cys131. Residues Cys128 and Cys131 are joined by a disulfide bond. N-linked (GlcNAc...) asparagine glycans are attached at residues Asn209, Asn293, Asn313, and Asn338. In terms of domain architecture, Thioredoxin 2 spans 416–546 (DFLADKLKPF…LYKFLKKHAS (131 aa)). Catalysis depends on nucleophile residues Cys467 and Cys470. Cysteines 467 and 470 form a disulfide. Asn520 carries N-linked (GlcNAc...) asparagine glycosylation. The interval 558–579 (EPVISTMKSDEKIEGDSSKDEL) is disordered. Positions 565–579 (KSDEKIEGDSSKDEL) are enriched in basic and acidic residues. A Prevents secretion from ER motif is present at residues 576 to 579 (KDEL).

It belongs to the protein disulfide isomerase family. Widely expressed.

The protein localises to the endoplasmic reticulum lumen. The catalysed reaction is Catalyzes the rearrangement of -S-S- bonds in proteins.. Its function is as follows. Acts as a protein-folding catalyst that interacts with nascent polypeptides to catalyze the formation, isomerization, and reduction or oxidation of disulfide bonds. The sequence is that of Protein disulfide isomerase-like 1-3 (PDIL1-3) from Arabidopsis thaliana (Mouse-ear cress).